A 425-amino-acid polypeptide reads, in one-letter code: tRNA(Ile)-lysidine synthase (425 aa).

Residue 27–32 (SGGLDS) participates in ATP binding.

It belongs to the tRNA(Ile)-lysidine synthase family.

It localises to the cytoplasm. The catalysed reaction is cytidine(34) in tRNA(Ile2) + L-lysine + ATP = lysidine(34) in tRNA(Ile2) + AMP + diphosphate + H(+). Functionally, ligates lysine onto the cytidine present at position 34 of the AUA codon-specific tRNA(Ile) that contains the anticodon CAU, in an ATP-dependent manner. Cytidine is converted to lysidine, thus changing the amino acid specificity of the tRNA from methionine to isoleucine. This is tRNA(Ile)-lysidine synthase from Streptococcus gordonii (strain Challis / ATCC 35105 / BCRC 15272 / CH1 / DL1 / V288).